Here is a 246-residue protein sequence, read N- to C-terminus: tRNA pseudouridine synthase A (246 aa).

Aspartate 51 serves as the catalytic Nucleophile. Tyrosine 105 is a substrate binding site.

The protein belongs to the tRNA pseudouridine synthase TruA family.

It carries out the reaction uridine(38/39/40) in tRNA = pseudouridine(38/39/40) in tRNA. Functionally, formation of pseudouridine at positions 38, 39 and 40 in the anticodon stem and loop of transfer RNAs. This Thermoplasma volcanium (strain ATCC 51530 / DSM 4299 / JCM 9571 / NBRC 15438 / GSS1) protein is tRNA pseudouridine synthase A.